The primary structure comprises 661 residues: Sorting nexin-4 (661 aa).

Polar residues-rich tracts occupy residues 1 to 10 and 26 to 36; these read MSDQFTSIQW and HSQVQINSSIN. Disordered regions lie at residues 1–49 and 56–75; these read MSDQ…QEQD and TVVR…IPPR. A compositionally biased stretch (acidic residues) spans 38-49; that stretch reads IEEDQGQEQEQD. A compositionally biased stretch (polar residues) spans 56-70; that stretch reads TVVRGGNDSDSNPNE. Residues 77-198 enclose the PX domain; sequence VYIRSKVSQP…HIFLEDSVNW (122 aa). Positions 120, 122, 146, and 165 each coordinate a 1,2-diacyl-sn-glycero-3-phospho-(1D-myo-inositol-3-phosphate). Basic and acidic residues predominate over residues 554–572; it reads LRSIKSQERKNEQVHKQDQ. Residues 554–661 are disordered; it reads LRSIKSQERK…LVDVEGLEQW (108 aa). The span at 624–640 shows a compositional bias: polar residues; it reads ASQTESHTQSEPQNDNQ. The segment covering 645 to 661 has biased composition (acidic residues); it reads DDGSDEGLVDVEGLEQW.

The protein belongs to the sorting nexin family.

The protein resides in the cytoplasm. Its subcellular location is the membrane. It is found in the vacuole membrane. Functionally, sorting nexin involved in the separation or division of vacuoles throughout the entire life cycle of the cells. Required for glucose-induced micropexophagy and ethanol-induced macropexophagy. Involved in the fusion between the pexophagosome and the vacuole. Also involved in the separation or division of vacuoles throughout the entire life cycle of the cells. This Komagataella pastoris (Yeast) protein is Sorting nexin-4 (SNX4).